Consider the following 55-residue polypeptide: Small ribosomal subunit protein uS14 (55 aa).

Zn(2+) contacts are provided by Cys20, Cys23, Cys38, and Cys41.

The protein belongs to the universal ribosomal protein uS14 family. Requires Zn(2+) as cofactor.

The chain is Small ribosomal subunit protein uS14 (rps29) from Dictyostelium discoideum (Social amoeba).